Here is a 76-residue protein sequence, read N- to C-terminus: Ovarian cancer-related protein 1 (76 aa).

The chain is Ovarian cancer-related protein 1 (OCR1) from Homo sapiens (Human).